Consider the following 273-residue polypeptide: MTDVRRVFFVSDRTGITAEALGHSLMTQFSVTTEQATIPFVDTAERARAALRRITAASAEDDHPPIVFSTIIDPEVLAVLRESEHIVLFDFFDTFIAPLERELEVPSNHVIGRSHGIADDSTYDVRIDAMNFALHHDDGATHQHYGRADVILVGVSRSGKTPASLYLALQFGVYAANYPLTDDDLIATRLPRALVSHRAKLFGLTIDPDRLHQIRSERRPNSRYAELRQCEYEVARAEAMFRREGIPYLDITTMSIEEISSTVIHQHALTRRV.

154–161 (GVSRSGKT) contributes to the ADP binding site.

It belongs to the pyruvate, phosphate/water dikinase regulatory protein family. PSRP subfamily.

The enzyme catalyses [pyruvate, water dikinase] + ADP = [pyruvate, water dikinase]-phosphate + AMP + H(+). The catalysed reaction is [pyruvate, water dikinase]-phosphate + phosphate + H(+) = [pyruvate, water dikinase] + diphosphate. Functionally, bifunctional serine/threonine kinase and phosphorylase involved in the regulation of the phosphoenolpyruvate synthase (PEPS) by catalyzing its phosphorylation/dephosphorylation. The protein is Putative phosphoenolpyruvate synthase regulatory protein of Halorhodospira halophila (strain DSM 244 / SL1) (Ectothiorhodospira halophila (strain DSM 244 / SL1)).